Reading from the N-terminus, the 2130-residue chain is Bromodomain adjacent to zinc finger domain protein 2B (2130 aa).

Disordered regions lie at residues 1 to 42 (MESG…TGAA), 82 to 118 (LFAP…SLNG), 151 to 293 (GGRK…QKQP), 491 to 518 (KTTG…PVSN), 543 to 633 (VDSD…SSIG), 756 to 790 (EGRR…GSTE), and 944 to 966 (RKKA…LNKE). Residues 8-33 (TSSSVSSTAAASSPVSSTPSVASAVS) are compositionally biased toward low complexity. Positions 183–206 (ESSSNSDSDSGSSSDTSSEGISSS) are enriched in low complexity. The span at 207-234 (DSDDLEEDEEEEEDQSAEESEDDESDSE) shows a compositional bias: acidic residues. Over residues 250–270 (GVKDMKTDGQKAHEKSQEKRT) the composition is skewed to basic and acidic residues. Positions 272–283 (QQIPLVSDSQTH) are enriched in polar residues. Low complexity predominate over residues 284 to 293 (SSFQSQQKQP). The segment covering 492–505 (TTGNRTLVVPSTSP) has biased composition (polar residues). Residues 543–554 (VDSDAPSSKESD) are compositionally biased toward basic and acidic residues. Acidic residues predominate over residues 555–611 (DSNDDDDDDEDEDEDDEDDDSDDSQSESDSNSESDTDGSEDEDDEDDKDQDESDTDT). Over residues 623–633 (TGSSIKSSSIG) the composition is skewed to low complexity. In terms of domain architecture, MBD spans 687-762 (VTDERELRVP…RAMEGRRGRP (76 aa)). The segment covering 756–775 (EGRRGRPPNPDRQHSREESR) has biased composition (basic and acidic residues). Residues 797–984 (AKLLRKLQAQ…ELEMAKELKK (188 aa)) are a coiled coil. Positions 1010–1075 (GSTFSDCLMI…VTAAVCDPGL (66 aa)) constitute a DDT domain. Disordered regions lie at residues 1186–1265 (TGKR…DQTV), 1431–1454 (SLCS…NLFS), 1499–1545 (VTHV…PFAM), and 1773–1795 (HKKH…ERKN). Acidic residues predominate over residues 1220–1244 (SDYDDDDDDDSDDQADEDDEDEEDK). Residues 1245 to 1254 (EDKKGKKAEV) show a composition bias toward basic and acidic residues. Pro residues predominate over residues 1514-1526 (SHPPSKSPSPVPS). The PHD-type zinc finger occupies 1895 to 1945 (KVYCQICRKGDNEELLLLCDGCDKGCHTYCHRPKITTIPDGDWFCPACIAK). The interval 1957–2019 (QIKGKKSNEQ…KQENFTAIKK (63 aa)) is disordered. Over residues 1991–2002 (GKTEPKKRKMDE) the composition is skewed to basic and acidic residues. Polar residues predominate over residues 2004–2014 (VSVSQGKQENF). The Bromo domain occupies 2022–2126 (RDDSKDLAIC…KYFEKKWTEI (105 aa)).

This sequence belongs to the WAL family.

Its subcellular location is the nucleus. Its function is as follows. Regulatory subunit of the ATP-dependent BRF-1 and BRF-5 ISWI chromatin remodeling complexes, which form ordered nucleosome arrays on chromatin and facilitate access to DNA during DNA-templated processes such as DNA replication, transcription, and repair. Both complexes regulate the spacing of nucleosomes along the chromatin and have the ability to slide mononucleosomes to the center of a DNA template. The BRF-1 ISWI chromatin remodeling complex has a lower ATP hydrolysis rate than the BRF-5 ISWI chromatin remodeling complex. Chromatin reader protein. Represses the expression of mitochondrial function-related genes, perhaps by transcriptional regulation. The sequence is that of Bromodomain adjacent to zinc finger domain protein 2B (BAZ2B) from Gallus gallus (Chicken).